The following is a 320-amino-acid chain: Glycerol-3-phosphate dehydrogenase [NAD(P)+] (320 aa).

The NADPH site is built by Phe11, Arg30, and Lys102. 3 residues coordinate sn-glycerol 3-phosphate: Lys102, Gly130, and Ser132. Residue Ala134 participates in NADPH binding. 5 residues coordinate sn-glycerol 3-phosphate: Lys185, Asp238, Ser248, Arg249, and Asn250. Lys185 serves as the catalytic Proton acceptor. Arg249 is an NADPH binding site. Glu270 is a binding site for NADPH.

The protein belongs to the NAD-dependent glycerol-3-phosphate dehydrogenase family.

It is found in the cytoplasm. It carries out the reaction sn-glycerol 3-phosphate + NAD(+) = dihydroxyacetone phosphate + NADH + H(+). The catalysed reaction is sn-glycerol 3-phosphate + NADP(+) = dihydroxyacetone phosphate + NADPH + H(+). It functions in the pathway membrane lipid metabolism; glycerophospholipid metabolism. In terms of biological role, catalyzes the reduction of the glycolytic intermediate dihydroxyacetone phosphate (DHAP) to sn-glycerol 3-phosphate (G3P), the key precursor for phospholipid synthesis. The protein is Glycerol-3-phosphate dehydrogenase [NAD(P)+] of Roseobacter denitrificans (strain ATCC 33942 / OCh 114) (Erythrobacter sp. (strain OCh 114)).